A 2771-amino-acid polypeptide reads, in one-letter code: Teneurin-4 (2771 aa).

Residues 1 to 22 (MDVKERKPYRSLTRRRDAERRY) show a composition bias toward basic and acidic residues. The disordered stretch occupies residues 1-45 (MDVKERKPYRSLTRRRDAERRYTSSSADSEEGKGPQKSYSSSETL). The region spanning 1–341 (MDVKERKPYR…KPSKYCNWKC (341 aa)) is the Teneurin N-terminal domain. Topologically, residues 1 to 345 (MDVKERKPYR…YCNWKCAALS (345 aa)) are cytoplasmic. Position 124 is a phosphoserine (Ser124). The interval 132 to 233 (WGRSTRSGRS…PPAGSAQEPT (102 aa)) is disordered. Positions 134-155 (RSTRSGRSSCLSSRANSNLTLT) are enriched in low complexity. Residues 156-166 (DTEHENTETDH) are compositionally biased toward basic and acidic residues. At Thr178 the chain carries Phosphothreonine. Residues 191–211 (QHHAASINSLNRGNFTPRSNP) are compositionally biased toward polar residues. Residues 346 to 366 (AILISATLVILLAYFVAMHLF) form a helical membrane-spanning segment. Residues 367–2771 (GLNWHLQPME…FMRQSEMGRR (2405 aa)) lie on the Extracellular side of the membrane. The interval 403-428 (SGGTGLETPDRKGKGAAEGKPSSLFP) is disordered. Over residues 410–419 (TPDRKGKGAA) the composition is skewed to basic and acidic residues. An N-linked (GlcNAc...) asparagine glycan is attached at Asn469. Positions 509 to 528 (ARSLEGPQRQSRGPVPPSSH) are disordered. EGF-like domains are found at residues 564–595 (SVDN…PDCG), 596–626 (RASC…AECD), 628–660 (PTNQ…ESCE), 661–692 (EVDC…TNCE), 694–727 (PRAT…HDCS), 728–759 (IEIC…ACDQ), 760–789 (RACH…EHCT), and 790–833 (IAHY…TGCD). 22 disulfides stabilise this stretch: Cys568–Cys578, Cys572–Cys583, Cys585–Cys594, Cys603–Cys614, Cys616–Cys625, Cys632–Cys643, Cys637–Cys648, Cys650–Cys659, Cys664–Cys675, Cys669–Cys680, Cys682–Cys691, Cys702–Cys715, Cys717–Cys726, Cys731–Cys741, Cys735–Cys746, Cys748–Cys757, Cys762–Cys772, Cys766–Cys777, Cys779–Cys788, Cys802–Cys812, Cys806–Cys821, and Cys823–Cys832. Asn942 and Asn1261 each carry an N-linked (GlcNAc...) asparagine glycan. NHL repeat units lie at residues 1218-1261 (SCPS…PSGN), 1266-1310 (LEMR…VKST), 1336-1380 (TRCG…NGII), 1395-1446 (LSCD…VAGR), and 1525-1568 (CFSG…IRKN). The YD 1 repeat unit spans residues 1578–1597 (YELSSPIDQELYLFDTSGKH). A glycan (N-linked (GlcNAc...) asparagine) is linked at Asn1611. YD repeat units follow at residues 1614–1634 (YTGD…VNVR), 1677–1696 (YHGN…WTTF), and 1697–1719 (YEYD…SSFR). N-linked (GlcNAc...) asparagine glycosylation is found at Asn1707, Asn1743, Asn1801, and Asn1886. YD repeat units follow at residues 1889–1908 (YSPG…ERME), 1930–1948 (YLEK…YIFE), 1949–1969 (FDKN…QTLE), 1976–1993 (YYRN…VIQD), 1994–2015 (FTED…VIYK), 2016–2033 (YGKL…TKVS), 2036–2056 (YDET…FTCT), 2059–2079 (YRQI…EGMV), 2087–2106 (YDNS…TPLP), 2112–2129 (YDDV…GVIY), 2130–2156 (YDIN…MKEV), 2158–2171 (YEIF…MTVQ), 2172–2195 (YDNM…TRYS), 2198–2218 (YDAD…WRYS), 2219–2239 (YDLN…LTPL), 2241–2261 (YDLR…DEDG), 2273–2293 (YNSA…SVRY), and 2295–2315 (YDGL…LQFF). The N-linked (GlcNAc...) asparagine glycan is linked to Asn1987. An N-linked (GlcNAc...) asparagine glycan is attached at Asn2190. Residue Asn2330 is glycosylated (N-linked (GlcNAc...) asparagine). Residues 2341 to 2382 (YDLQGHLFAMELSSGDEFYIACDNIGTPLAVFSGTGLMIKQI) form a YD 23 repeat. An N-linked (GlcNAc...) asparagine glycan is attached at Asn2648.

The protein belongs to the tenascin family. Teneurin subfamily. As to quaternary structure, homodimer; disulfide-linked. May also form heterodimer with either TENM1 or TENM2 or TENM3. In terms of tissue distribution, expressed in brain and spinal cord (at protein level). Expressed in neurons and oligodendrocytes of the spinal cord. Expressed weakly in kidney, lung and spleen. Expressed in the cortex, CA1, CA2 and CA3 of the hippocampus. Expressed in the white matter, Purkinje cells and molecular layer of the cerebellum.

The protein localises to the cell membrane. Its subcellular location is the cell projection. It localises to the nucleus. It is found in the cytoplasm. Functionally, involved in neural development, regulating the establishment of proper connectivity within the nervous system. Plays a role in the establishment of the anterior-posterior axis during gastrulation. Regulates the differentiation and cellular process formation of oligodendrocytes and myelination of small-diameter axons in the central nervous system (CNS). Promotes activation of focal adhesion kinase. May function as a cellular signal transducer. This is Teneurin-4 (Tenm4) from Mus musculus (Mouse).